The sequence spans 312 residues: Glycine--tRNA ligase alpha subunit (312 aa).

It belongs to the class-II aminoacyl-tRNA synthetase family. In terms of assembly, tetramer of two alpha and two beta subunits.

Its subcellular location is the cytoplasm. It carries out the reaction tRNA(Gly) + glycine + ATP = glycyl-tRNA(Gly) + AMP + diphosphate. The chain is Glycine--tRNA ligase alpha subunit from Delftia acidovorans (strain DSM 14801 / SPH-1).